A 600-amino-acid polypeptide reads, in one-letter code: Netrin-1 (600 aa).

The first 24 residues, 1-24 (MMRAMWEALAALAAVSCLVGAVRG), serve as a signal peptide directing secretion. Positions 47–284 (HPRRCIPDFV…AVSDLQVGGR (238 aa)) constitute a Laminin N-terminal domain. 3 N-linked (GlcNAc...) asparagine glycosylation sites follow: Asn95, Asn116, and Asn131. Disulfide bonds link Cys119/Cys152, Cys285/Cys294, Cys287/Cys304, Cys306/Cys315, Cys318/Cys338, Cys341/Cys350, Cys343/Cys368, Cys371/Cys380, Cys383/Cys401, Cys404/Cys416, Cys406/Cys423, Cys425/Cys434, Cys437/Cys451, and Cys472/Cys544. Laminin EGF-like domains follow at residues 285–340 (CKCN…ECVA), 341–403 (CNCN…ACKA), and 404–453 (CDCH…PCIK). Residue Asn417 is glycosylated (N-linked (GlcNAc...) asparagine). One can recognise an NTR domain in the interval 472 to 600 (CDSYCKASKG…KFQQREKKEL (129 aa)). Residues 530 to 532 (RGD) carry the Cell attachment site motif.

As to quaternary structure, binds to its receptors; DCC, UNC5A, UNC5B, UNC5C and probably UNC5D. Binds to its receptor; DSCAM. Interacts with APP.

The protein resides in the secreted. It localises to the cytoplasm. Netrins control guidance of CNS commissural axons and peripheral motor axons. Its association with either DCC or some UNC5 receptors will lead to axon attraction or repulsion, respectively. Binding to UNC5C might cause dissociation of UNC5C from polymerized TUBB3 in microtubules and thereby lead to increased microtubule dynamics and axon repulsion. Involved in dorsal root ganglion axon projection towards the spinal cord. It also serves as a survival factor via its association with its receptors which prevent the initiation of apoptosis. Involved in colorectal tumorigenesis by regulating apoptosis. In Sus scrofa (Pig), this protein is Netrin-1 (NTN1).